The sequence spans 579 residues: F-box protein At5g39450 (579 aa).

The F-box domain occupies 16–62; sequence TCLLLSLPEDVIAVIARFVSPRDICNLSLCCKSLCDVVDSERIWLVQ.

In Arabidopsis thaliana (Mouse-ear cress), this protein is F-box protein At5g39450.